A 340-amino-acid polypeptide reads, in one-letter code: DNA-directed RNA polymerase subunit alpha (340 aa).

The segment at 1–233 is alpha N-terminal domain (alpha-NTD); sequence MIQDEIPIPV…DLFIIFLNME (233 aa). Positions 264 to 340 are alpha C-terminal domain (alpha-CTD); that stretch reads AKEVAFKQIF…QLPKDQFNIS (77 aa).

This sequence belongs to the RNA polymerase alpha chain family. In terms of assembly, in plastids the minimal PEP RNA polymerase catalytic core is composed of four subunits: alpha, beta, beta', and beta''. When a (nuclear-encoded) sigma factor is associated with the core the holoenzyme is formed, which can initiate transcription.

Its subcellular location is the plastid. It localises to the chloroplast. The catalysed reaction is RNA(n) + a ribonucleoside 5'-triphosphate = RNA(n+1) + diphosphate. In terms of biological role, DNA-dependent RNA polymerase catalyzes the transcription of DNA into RNA using the four ribonucleoside triphosphates as substrates. This is DNA-directed RNA polymerase subunit alpha from Psilotum nudum (Whisk fern).